Here is a 325-residue protein sequence, read N- to C-terminus: E3 ubiquitin-protein ligase SIAH2 (325 aa).

Residues 1–15 (MSRPSSTGPSANKPC) show a composition bias toward polar residues. A disordered region spans residues 1 to 43 (MSRPSSTGPSANKPCSKQPPPPQTPHAPSPAAPPAAATISAAG). A Phosphoserine modification is found at Ser-6. Ser-16 carries the post-translational modification Phosphoserine; by DYRK2. A compositionally biased stretch (pro residues) spans 17-33 (KQPPPPQTPHAPSPAAP). Position 24 is a phosphothreonine; by MAPK14 (Thr-24). At Ser-29 the chain carries Phosphoserine; by DYRK2 and MAPK14. The segment covering 34–43 (PAAATISAAG) has biased composition (low complexity). Ser-69 carries the phosphoserine; by DYRK2 modification. Residues 81-116 (CPVCFDYVLPPILQCQAGHLVCNQCRQKLSCCPTCR) form an RING-type zinc finger. Residue Thr-120 is modified to Phosphothreonine; by DYRK2. Residues 131-323 (VASAVLFPCK…LGINVTISTC (193 aa)) form an SBD region. An SIAH-type zinc finger spans residues 134–194 (AVLFPCKYAT…VMSHLMHAHK (61 aa)). Cys-139, Cys-146, His-158, Cys-162, Cys-169, Cys-176, His-188, and His-193 together coordinate Zn(2+).

It belongs to the SINA (Seven in absentia) family. Homodimer. Interacts with VAV1, without mediating its ubiquitin-mediated degradation. Probable component of some large E3 complex possibly composed of UBE2D1, SIAH2, CACYBP/SIP, SKP1, APC and TBL1X. Interacts with UBE2I. Interacts with UBE2E2. Interacts with PEG10, which may inhibit its activity. Interacts with PEG3 and EGLN2. Interacts with DYRK2. Interacts with SNCAIP. Interacts with NR1D1 and NR1D2. Interacts with DCC. Interacts with AXIN1. In terms of processing, phosphorylated at Thr-24 and Ser-29 by MAPK14, which mediates the degradation by the proteasome of EGLN3. Phosphorylated at Ser-29 by DYRK2; this increases the ubiquitin ligase activity and promotes degradation of EGLN3. As to expression, detected in brain (at protein level).

The protein resides in the cytoplasm. It is found in the nucleus. It carries out the reaction S-ubiquitinyl-[E2 ubiquitin-conjugating enzyme]-L-cysteine + [acceptor protein]-L-lysine = [E2 ubiquitin-conjugating enzyme]-L-cysteine + N(6)-ubiquitinyl-[acceptor protein]-L-lysine.. It functions in the pathway protein modification; protein ubiquitination. Its function is as follows. E3 ubiquitin-protein ligase that mediates ubiquitination and subsequent proteasomal degradation of target proteins. E3 ubiquitin ligases accept ubiquitin from an E2 ubiquitin-conjugating enzyme in the form of a thioester and then directly transfers the ubiquitin to targeted substrates. Mediates E3 ubiquitin ligase activity either through direct binding to substrates or by functioning as the essential RING domain subunit of larger E3 complexes. Mediates ubiquitination and proteasomal degradation of DYRK2 in response to hypoxia. Promotes monoubiquitination of SNCA. Triggers the ubiquitin-mediated degradation of many substrates, including proteins involved in transcription regulation (GPS2, POU2AF1, PML, NCOR1), a cell surface receptor (DCC), an antiapoptotic protein (BAG1), and a protein involved in synaptic vesicle function in neurons (SYP). It is thereby involved in apoptosis, tumor suppression, cell cycle, transcription and signaling processes. Has some overlapping function with SIAH1. Triggers the ubiquitin-mediated degradation of TRAF2, whereas SIAH1 does not. Regulates cellular clock function via ubiquitination of circadian transcriptional repressors NR1D1 and NR1D2 leading to their proteasomal degradation. Plays an important role in mediating the rhythmic degradation/clearance of NR1D1 and NR1D2 contributing to their circadian profile of protein abundance. Mediates ubiquitination and degradation of EGLN2 and EGLN3 in response to the unfolded protein response (UPR), leading to their degradation and subsequent stabilization of ATF4. Also part of the Wnt signaling pathway in which it mediates the Wnt-induced ubiquitin-mediated proteasomal degradation of AXIN1. In Rattus norvegicus (Rat), this protein is E3 ubiquitin-protein ligase SIAH2 (Siah2).